We begin with the raw amino-acid sequence, 694 residues long: Ubiquitin-like modifier-activating enzyme ATG7 (694 aa).

Residues 370–375 carry the GXGXXG motif motif; sequence GAGTLG. Catalysis depends on Cys-550, which acts as the Glycyl thioester intermediate. The homodimerization stretch occupies residues 650-689; sequence ALQEKEYVAELSGLAEVQRRAEEMAAHVDWEEDDDLVDDG.

The protein belongs to the ATG7 family. Homodimer. Interacts with ATG8 through a thioester bond between Cys-550 and the C-terminal 'Gly-116' of ATG8 and with ATG12 through a thioester bond between Cys-550 and the C-terminal 'Gly-160' of ATG12. Also interacts with ATG3.

The protein localises to the cytoplasm. Its subcellular location is the preautophagosomal structure. Its function is as follows. E1-like activating enzyme involved in the 2 ubiquitin-like systems required for cytoplasm to vacuole transport (Cvt) and autophagy. Activates ATG12 for its conjugation with ATG5 and ATG8 for its conjugation with phosphatidylethanolamine. Both systems are needed for the ATG8 association to Cvt vesicles and autophagosomes membranes. Autophagy is essential for maintenance of amino acid levels and protein synthesis under nitrogen starvation. Required for selective autophagic degradation of the nucleus (nucleophagy) as well as for mitophagy which contributes to regulate mitochondrial quantity and quality by eliminating the mitochondria to a basal level to fulfill cellular energy requirements and preventing excess ROS production. Autophagy is required for proper vegetative growth, asexual/sexual reproduction, and full virulence. Autophagy is particularly involved in the biosynthesis of deoxynivalenol (DON), an important virulence determinant. The polypeptide is Ubiquitin-like modifier-activating enzyme ATG7 (Gibberella zeae (strain ATCC MYA-4620 / CBS 123657 / FGSC 9075 / NRRL 31084 / PH-1) (Wheat head blight fungus)).